A 364-amino-acid chain; its full sequence is Dihydroorotate dehydrogenase (quinone) (364 aa).

Residues 61–65 (AGFDK) and Thr85 contribute to the FMN site. Residue Lys65 coordinates substrate. 110–114 (NRMGF) provides a ligand contact to substrate. Positions 139 and 170 each coordinate FMN. Asn170 contributes to the substrate binding site. The active-site Nucleophile is Ser173. A substrate-binding site is contributed by Asn175. Lys214 and Ala242 together coordinate FMN. 243–244 (NT) is a substrate binding site. FMN is bound by residues Gly266, Gly295, and 316 to 317 (YS).

It belongs to the dihydroorotate dehydrogenase family. Type 2 subfamily. In terms of assembly, monomer. FMN is required as a cofactor.

It is found in the cell membrane. It carries out the reaction (S)-dihydroorotate + a quinone = orotate + a quinol. It functions in the pathway pyrimidine metabolism; UMP biosynthesis via de novo pathway; orotate from (S)-dihydroorotate (quinone route): step 1/1. In terms of biological role, catalyzes the conversion of dihydroorotate to orotate with quinone as electron acceptor. The sequence is that of Dihydroorotate dehydrogenase (quinone) from Rhodopseudomonas palustris (strain ATCC BAA-98 / CGA009).